The primary structure comprises 222 residues: Superoxide dismutase [Mn], mitochondrial (222 aa).

Residues 1–24 (MLCRAACSAGRRLGPAASTAGSRH) constitute a mitochondrion transit peptide. Residue H50 coordinates Mn(2+). Y58 carries the post-translational modification 3'-nitrotyrosine. N6-acetyllysine; alternate is present on residues K68 and K75. 2 positions are modified to N6-succinyllysine; alternate: K68 and K75. Position 98 (H98) interacts with Mn(2+). An N6-acetyllysine modification is found at K114. K122 and K130 each carry N6-acetyllysine; alternate. N6-succinyllysine; alternate is present on residues K122 and K130. Mn(2+)-binding residues include D183 and H187. K202 carries the post-translational modification N6-acetyllysine.

This sequence belongs to the iron/manganese superoxide dismutase family. Homotetramer. Mn(2+) serves as cofactor. Post-translationally, nitrated under oxidative stress. Nitration coupled with oxidation inhibits the catalytic activity. Acetylation at Lys-122 decreases enzymatic activity. Deacetylated by SIRT3 upon exposure to ionizing radiations or after long fasting. In terms of processing, polyubiquitinated; leading to proteasomal degradation. Deubiquitinated by USP36 which increases protein stability.

It localises to the mitochondrion matrix. The catalysed reaction is 2 superoxide + 2 H(+) = H2O2 + O2. Destroys superoxide anion radicals which are normally produced within the cells and which are toxic to biological systems. This chain is Superoxide dismutase [Mn], mitochondrial (Sod2), found in Rattus norvegicus (Rat).